A 178-amino-acid chain; its full sequence is Photosystem I assembly protein Ycf4 (178 aa).

Helical transmembrane passes span 19–39 (ILVA…SLSS) and 61–81 (LIMG…WAVI).

The protein belongs to the Ycf4 family.

It localises to the cellular thylakoid membrane. In terms of biological role, seems to be required for the assembly of the photosystem I complex. In Synechococcus sp. (strain CC9311), this protein is Photosystem I assembly protein Ycf4.